The chain runs to 151 residues: Aspartate carbamoyltransferase regulatory chain (151 aa).

Zn(2+) is bound by residues Cys-107, Cys-112, Cys-135, and Cys-138.

The protein belongs to the PyrI family. In terms of assembly, contains catalytic and regulatory chains. The cofactor is Zn(2+).

Involved in allosteric regulation of aspartate carbamoyltransferase. The chain is Aspartate carbamoyltransferase regulatory chain from Thermococcus onnurineus (strain NA1).